Here is a 313-residue protein sequence, read N- to C-terminus: Protein TIC 22-like, chloroplastic (313 aa).

The transit peptide at 1-96 directs the protein to the chloroplast; the sequence is MNSNIFPPSK…RISDDGGGAR (96 aa).

This sequence belongs to the Tic22 family.

The protein localises to the plastid. It localises to the chloroplast intermembrane space. Involved in protein precursor import into chloroplasts. This chain is Protein TIC 22-like, chloroplastic (TIC22L), found in Arabidopsis thaliana (Mouse-ear cress).